The sequence spans 472 residues: ATP-dependent rRNA helicase rrp3 (472 aa).

The disordered stretch occupies residues 1-52 (MPAIKKRKIAREAPQQEDHSDSEAHSSASEDAAPNTTEQEQEPSEAPKQAPK). Over residues 10-24 (AREAPQQEDHSDSEA) the composition is skewed to basic and acidic residues. The Q motif motif lies at 52–80 (KSFKELGLIEQLCEACDSMGYKAPTAIQA). The region spanning 83–254 (IPLALQGRDL…RASLQNPLRV (172 aa)) is the Helicase ATP-binding domain. 96–103 (AETGSGKT) is a binding site for ATP. The DEAD box motif lies at 202 to 205 (DEAD). The Helicase C-terminal domain maps to 282–426 (YLVYLLNEFV…EYPAEKDEVM (145 aa)). The disordered stretch occupies residues 443–472 (MKNYDEKKGSRGKKFAKGKRSREDMDQEEG). A compositionally biased stretch (basic residues) spans 452-462 (SRGKKFAKGKR).

The protein belongs to the DEAD box helicase family. DDX47/RRP3 subfamily. Interacts with the SSU processome.

The protein resides in the nucleus. It carries out the reaction ATP + H2O = ADP + phosphate + H(+). ATP-dependent rRNA helicase required for pre-ribosomal RNA processing. Involved in the maturation of the 35S-pre-rRNA and to its cleavage to mature 18S rRNA. The protein is ATP-dependent rRNA helicase rrp3 of Aspergillus oryzae (strain ATCC 42149 / RIB 40) (Yellow koji mold).